Here is a 56-residue protein sequence, read N- to C-terminus: UPF0391 membrane protein Noc_0484 (56 aa).

The next 2 helical transmembrane spans lie at 6 to 26 and 29 to 49; these read VTFL…IAGI and EIAW…LVLG.

It belongs to the UPF0391 family.

It localises to the cell membrane. This Nitrosococcus oceani (strain ATCC 19707 / BCRC 17464 / JCM 30415 / NCIMB 11848 / C-107) protein is UPF0391 membrane protein Noc_0484.